We begin with the raw amino-acid sequence, 72 residues long: U-actitoxin-Aeq5b (72 aa).

The signal sequence occupies residues 1–20; sequence MNQVMTIFLVLGVIVYSVES. Intrachain disulfides connect cysteine 33-cysteine 71, cysteine 37-cysteine 66, cysteine 44-cysteine 59, and cysteine 50-cysteine 56.

This sequence belongs to the Acrorhagin I family. As to expression, expressed by acrorhagi.

The protein resides in the secreted. The protein localises to the nematocyst. In terms of biological role, toxin that is lethal to crab. It interacts with divalent metal ions (zinc and nickel) suggesting it may function as a metal ion chelator to regulate metal ion levels or as a metal ion transporter, or that its function is modulated by metal ions. Is not active against any of the voltage-gated potassium and sodium channels tested. In addition, it does not show activity in bacterial and fungal growth inhibitory assays as well as in hemolytic assays. This chain is U-actitoxin-Aeq5b, found in Actinia equina (Beadlet anemone).